The sequence spans 213 residues: LexA repressor 2 (213 aa).

The H-T-H motif DNA-binding region spans 27–47; it reads QTEIARAFGFKGVRAAQYHLE. Residues Ser133 and Lys170 each act as for autocatalytic cleavage activity in the active site.

This sequence belongs to the peptidase S24 family. As to quaternary structure, homodimer.

It catalyses the reaction Hydrolysis of Ala-|-Gly bond in repressor LexA.. Its function is as follows. Represses a number of genes involved in the response to DNA damage (SOS response), including recA and lexA. In the presence of single-stranded DNA, RecA interacts with LexA causing an autocatalytic cleavage which disrupts the DNA-binding part of LexA, leading to derepression of the SOS regulon and eventually DNA repair. The sequence is that of LexA repressor 2 from Xanthomonas oryzae pv. oryzae (strain KACC10331 / KXO85).